Here is a 79-residue protein sequence, read N- to C-terminus: Cell division protein ZapB (79 aa).

A coiled-coil region spans residues 4-78; it reads EVFEKLEAKV…LQALLGKMEE (75 aa).

Belongs to the ZapB family. As to quaternary structure, homodimer. The ends of the coiled-coil dimer bind to each other, forming polymers. Interacts with FtsZ.

It localises to the cytoplasm. Its function is as follows. Non-essential, abundant cell division factor that is required for proper Z-ring formation. It is recruited early to the divisome by direct interaction with FtsZ, stimulating Z-ring assembly and thereby promoting cell division earlier in the cell cycle. Its recruitment to the Z-ring requires functional FtsA or ZipA. This Cronobacter sakazakii (strain ATCC BAA-894) (Enterobacter sakazakii) protein is Cell division protein ZapB.